Reading from the N-terminus, the 386-residue chain is Acetylornithine aminotransferase (386 aa).

Residues 96 to 97 and F123 contribute to the pyridoxal 5'-phosphate site; that span reads GA. A N(2)-acetyl-L-ornithine-binding site is contributed by R126. 208-211 serves as a coordination point for pyridoxal 5'-phosphate; it reads DEVQ. K237 carries the N6-(pyridoxal phosphate)lysine modification. S265 provides a ligand contact to N(2)-acetyl-L-ornithine. Residue T266 participates in pyridoxal 5'-phosphate binding.

Belongs to the class-III pyridoxal-phosphate-dependent aminotransferase family. ArgD subfamily. Homodimer. It depends on pyridoxal 5'-phosphate as a cofactor.

The protein resides in the cytoplasm. The enzyme catalyses N(2)-acetyl-L-ornithine + 2-oxoglutarate = N-acetyl-L-glutamate 5-semialdehyde + L-glutamate. The protein operates within amino-acid biosynthesis; L-arginine biosynthesis; N(2)-acetyl-L-ornithine from L-glutamate: step 4/4. The sequence is that of Acetylornithine aminotransferase from Bacillus cereus (strain ATCC 14579 / DSM 31 / CCUG 7414 / JCM 2152 / NBRC 15305 / NCIMB 9373 / NCTC 2599 / NRRL B-3711).